Consider the following 37-residue polypeptide: Large ribosomal subunit protein bL36c (37 aa).

Belongs to the bacterial ribosomal protein bL36 family.

Its subcellular location is the plastid. It is found in the chloroplast. This is Large ribosomal subunit protein bL36c from Stigeoclonium helveticum (Green alga).